Here is a 382-residue protein sequence, read N- to C-terminus: Protein RecA (382 aa).

79 to 86 serves as a coordination point for ATP; that stretch reads GPESSGKT.

Belongs to the RecA family.

The protein localises to the cytoplasm. Its function is as follows. Can catalyze the hydrolysis of ATP in the presence of single-stranded DNA, the ATP-dependent uptake of single-stranded DNA by duplex DNA, and the ATP-dependent hybridization of homologous single-stranded DNAs. It interacts with LexA causing its activation and leading to its autocatalytic cleavage. This Streptococcus sanguinis (strain SK36) protein is Protein RecA.